A 249-amino-acid polypeptide reads, in one-letter code: Diaminopimelate epimerase (249 aa).

The substrate site is built by Asn11 and Asn60. Residue Cys69 is the Proton donor of the active site. Substrate-binding positions include 70 to 71 (GN), Asn164, and 182 to 183 (ER). Residue Cys192 is the Proton acceptor of the active site. Position 193-194 (193-194 (GT)) interacts with substrate.

Belongs to the diaminopimelate epimerase family. Homodimer.

The protein resides in the cytoplasm. The enzyme catalyses (2S,6S)-2,6-diaminopimelate = meso-2,6-diaminopimelate. It participates in amino-acid biosynthesis; L-lysine biosynthesis via DAP pathway; DL-2,6-diaminopimelate from LL-2,6-diaminopimelate: step 1/1. Its function is as follows. Catalyzes the stereoinversion of LL-2,6-diaminopimelate (L,L-DAP) to meso-diaminopimelate (meso-DAP), a precursor of L-lysine and an essential component of the bacterial peptidoglycan. This Campylobacter jejuni subsp. doylei (strain ATCC BAA-1458 / RM4099 / 269.97) protein is Diaminopimelate epimerase.